A 1430-amino-acid polypeptide reads, in one-letter code: Gag-Pol polyprotein (1430 aa).

The N-myristoyl glycine; by host moiety is linked to residue G2. Positions V7 to L31 are interaction with Gp41. An interaction with host CALM1 region spans residues L8–R43. An interaction with host AP3D1 region spans residues K12–I19. Residues D14 to H33 are interaction with membrane phosphatidylinositol 4,5-bisphosphate and RNA. Positions W16–R22 match the Nuclear export signal motif. A Nuclear localization signal motif is present at residues K26 to K32. The segment at E73 to S77 is interaction with membrane phosphatidylinositol 4,5-bisphosphate. Y128 is subject to Phosphotyrosine; by host. The interval N185–Q223 is interaction with human PPIA/CYPA and NUP153. The segment at Y273–L359 is dimerization/Multimerization of capsid protein p24. 2 CCHC-type zinc fingers span residues V385–A402 and K406–E423. Residues E439–S480 are disordered. Residues S445–S455 show a composition bias toward polar residues. Positions P484–L488 are dimerization of protease. The region spanning R503–L572 is the Peptidase A2 domain. The active-site For protease activity; shared with dimeric partner is D508. Dimerization of protease regions lie at residues G532–K538 and N571–P583. A Reverse transcriptase domain is found at E626–L816. The Mg(2+) site is built by D692, D767, and D768. The tract at residues F809 to H817 is RT 'primer grip'. The Tryptophan repeat motif motif lies at W980–W996. One can recognise an RNase H type-1 domain in the interval I1016–R1139. Mg(2+) is bound by residues D1025, E1060, D1080, and D1131. The segment at D1145–Q1186 adopts an Integrase-type zinc-finger fold. Zn(2+) is bound by residues H1154, H1158, C1182, and C1185. The Integrase catalytic domain maps to V1196–I1346. Mg(2+)-binding residues include D1206, D1258, and E1294. The segment at residues F1365 to D1412 is a DNA-binding region (integrase-type).

Homotrimer; further assembles as hexamers of trimers. Interacts with gp41 (via C-terminus). Interacts with host CALM1; this interaction induces a conformational change in the Matrix protein, triggering exposure of the myristate group. Interacts with host AP3D1; this interaction allows the polyprotein trafficking to multivesicular bodies during virus assembly. Part of the pre-integration complex (PIC) which is composed of viral genome, matrix protein, Vpr and integrase. In terms of assembly, homodimer; the homodimer further multimerizes as homohexamers or homopentamers. Interacts with human PPIA/CYPA; This interaction stabilizes the capsid. Interacts with human NUP153. Interacts with host PDZD8; this interaction stabilizes the capsid. Interacts with monkey TRIM5; this interaction destabilizes the capsid. As to quaternary structure, homodimer, whose active site consists of two apposed aspartic acid residues. Heterodimer of p66 RT and p51 RT (RT p66/p51). Heterodimerization of RT is essential for DNA polymerase activity. The overall folding of the subdomains is similar in p66 RT and p51 RT but the spatial arrangements of the subdomains are dramatically different. In terms of assembly, homotetramer; may further associate as a homohexadecamer. Part of the pre-integration complex (PIC) which is composed of viral genome, matrix protein, Vpr and integrase. Interacts with human SMARCB1/INI1 and human PSIP1/LEDGF isoform 1. Interacts with human KPNA3; this interaction might play a role in nuclear import of the pre-integration complex. Interacts with human NUP153; this interaction might play a role in nuclear import of the pre-integration complex. Requires Mg(2+) as cofactor. In terms of processing, specific enzymatic cleavages by the viral protease yield mature proteins. The protease is released by autocatalytic cleavage. The polyprotein is cleaved during and after budding, this process is termed maturation. Proteolytic cleavage of p66 RT removes the RNase H domain to yield the p51 RT subunit. Nucleocapsid protein p7 might be further cleaved after virus entry. Post-translationally, tyrosine phosphorylated presumably in the virion by a host kinase. Phosphorylation is apparently not a major regulator of membrane association. Phosphorylated possibly by host MAPK1; this phosphorylation is necessary for Pin1-mediated virion uncoating. In terms of processing, methylated by host PRMT6, impairing its function by reducing RNA annealing and the initiation of reverse transcription.

The protein resides in the host cell membrane. Its subcellular location is the host endosome. It localises to the host multivesicular body. It is found in the virion membrane. The protein localises to the host nucleus. The protein resides in the host cytoplasm. Its subcellular location is the virion. It carries out the reaction Specific for a P1 residue that is hydrophobic, and P1' variable, but often Pro.. It catalyses the reaction Endohydrolysis of RNA in RNA/DNA hybrids. Three different cleavage modes: 1. sequence-specific internal cleavage of RNA. Human immunodeficiency virus type 1 and Moloney murine leukemia virus enzymes prefer to cleave the RNA strand one nucleotide away from the RNA-DNA junction. 2. RNA 5'-end directed cleavage 13-19 nucleotides from the RNA end. 3. DNA 3'-end directed cleavage 15-20 nucleotides away from the primer terminus.. The enzyme catalyses 3'-end directed exonucleolytic cleavage of viral RNA-DNA hybrid.. The catalysed reaction is DNA(n) + a 2'-deoxyribonucleoside 5'-triphosphate = DNA(n+1) + diphosphate. Its activity is regulated as follows. Protease: The viral protease is inhibited by many synthetic protease inhibitors (PIs), such as amprenavir, atazanavir, indinavir, loprinavir, nelfinavir, ritonavir and saquinavir. Use of protease inhibitors in tritherapy regimens permit more ambitious therapeutic strategies. Reverse transcriptase/ribonuclease H: RT can be inhibited either by nucleoside RT inhibitors (NRTIs) or by non nucleoside RT inhibitors (NNRTIs). NRTIs act as chain terminators, whereas NNRTIs inhibit DNA polymerization by binding a small hydrophobic pocket near the RT active site and inducing an allosteric change in this region. Classical NRTIs are abacavir, adefovir (PMEA), didanosine (ddI), lamivudine (3TC), stavudine (d4T), tenofovir (PMPA), zalcitabine (ddC), and zidovudine (AZT). Classical NNRTIs are atevirdine (BHAP U-87201E), delavirdine, efavirenz (DMP-266), emivirine (I-EBU), and nevirapine (BI-RG-587). The tritherapies used as a basic effective treatment of AIDS associate two NRTIs and one NNRTI. Its function is as follows. Mediates, with Gag polyprotein, the essential events in virion assembly, including binding the plasma membrane, making the protein-protein interactions necessary to create spherical particles, recruiting the viral Env proteins, and packaging the genomic RNA via direct interactions with the RNA packaging sequence (Psi). Gag-Pol polyprotein may regulate its own translation, by the binding genomic RNA in the 5'-UTR. At low concentration, the polyprotein would promote translation, whereas at high concentration, the polyprotein would encapsidate genomic RNA and then shut off translation. Functionally, targets the polyprotein to the plasma membrane via a multipartite membrane-binding signal, that includes its myristoylated N-terminus. Matrix protein is part of the pre-integration complex. Implicated in the release from host cell mediated by Vpu. Binds to RNA. In terms of biological role, forms the conical core that encapsulates the genomic RNA-nucleocapsid complex in the virion. Most core are conical, with only 7% tubular. The core is constituted by capsid protein hexamer subunits. The core is disassembled soon after virion entry. Host restriction factors such as TRIM5-alpha or TRIMCyp bind retroviral capsids and cause premature capsid disassembly, leading to blocks in reverse transcription. Capsid restriction by TRIM5 is one of the factors which restricts HIV-1 to the human species. Host PIN1 apparently facilitates the virion uncoating. On the other hand, interactions with PDZD8 or CYPA stabilize the capsid. Encapsulates and protects viral dimeric unspliced genomic RNA (gRNA). Binds these RNAs through its zinc fingers. Acts as a nucleic acid chaperone which is involved in rearangement of nucleic acid secondary structure during gRNA retrotranscription. Also facilitates template switch leading to recombination. As part of the polyprotein, participates in gRNA dimerization, packaging, tRNA incorporation and virion assembly. Its function is as follows. Aspartyl protease that mediates proteolytic cleavages of Gag and Gag-Pol polyproteins during or shortly after the release of the virion from the plasma membrane. Cleavages take place as an ordered, step-wise cascade to yield mature proteins. This process is called maturation. Displays maximal activity during the budding process just prior to particle release from the cell. Also cleaves Nef and Vif, probably concomitantly with viral structural proteins on maturation of virus particles. Hydrolyzes host EIF4GI and PABP1 in order to shut off the capped cellular mRNA translation. The resulting inhibition of cellular protein synthesis serves to ensure maximal viral gene expression and to evade host immune response. Also mediates cleavage of host YTHDF3. Mediates cleavage of host CARD8, thereby activating the CARD8 inflammasome, leading to the clearance of latent HIV-1 in patient CD4(+) T-cells after viral reactivation; in contrast, HIV-1 can evade CARD8-sensing when its protease remains inactive in infected cells prior to viral budding. Functionally, multifunctional enzyme that converts the viral RNA genome into dsDNA in the cytoplasm, shortly after virus entry into the cell. This enzyme displays a DNA polymerase activity that can copy either DNA or RNA templates, and a ribonuclease H (RNase H) activity that cleaves the RNA strand of RNA-DNA heteroduplexes in a partially processive 3' to 5' endonucleasic mode. Conversion of viral genomic RNA into dsDNA requires many steps. A tRNA(3)-Lys binds to the primer-binding site (PBS) situated at the 5'-end of the viral RNA. RT uses the 3' end of the tRNA primer to perform a short round of RNA-dependent minus-strand DNA synthesis. The reading proceeds through the U5 region and ends after the repeated (R) region which is present at both ends of viral RNA. The portion of the RNA-DNA heteroduplex is digested by the RNase H, resulting in a ssDNA product attached to the tRNA primer. This ssDNA/tRNA hybridizes with the identical R region situated at the 3' end of viral RNA. This template exchange, known as minus-strand DNA strong stop transfer, can be either intra- or intermolecular. RT uses the 3' end of this newly synthesized short ssDNA to perform the RNA-dependent minus-strand DNA synthesis of the whole template. RNase H digests the RNA template except for two polypurine tracts (PPTs) situated at the 5'-end and near the center of the genome. It is not clear if both polymerase and RNase H activities are simultaneous. RNase H probably can proceed both in a polymerase-dependent (RNA cut into small fragments by the same RT performing DNA synthesis) and a polymerase-independent mode (cleavage of remaining RNA fragments by free RTs). Secondly, RT performs DNA-directed plus-strand DNA synthesis using the PPTs that have not been removed by RNase H as primers. PPTs and tRNA primers are then removed by RNase H. The 3' and 5' ssDNA PBS regions hybridize to form a circular dsDNA intermediate. Strand displacement synthesis by RT to the PBS and PPT ends produces a blunt ended, linear dsDNA copy of the viral genome that includes long terminal repeats (LTRs) at both ends. In terms of biological role, catalyzes viral DNA integration into the host chromosome, by performing a series of DNA cutting and joining reactions. This enzyme activity takes place after virion entry into a cell and reverse transcription of the RNA genome in dsDNA. The first step in the integration process is 3' processing. This step requires a complex comprising the viral genome, matrix protein, Vpr and integrase. This complex is called the pre-integration complex (PIC). The integrase protein removes 2 nucleotides from each 3' end of the viral DNA, leaving recessed CA OH's at the 3' ends. In the second step, the PIC enters cell nucleus. This process is mediated through integrase and Vpr proteins, and allows the virus to infect a non dividing cell. This ability to enter the nucleus is specific of lentiviruses, other retroviruses cannot and rely on cell division to access cell chromosomes. In the third step, termed strand transfer, the integrase protein joins the previously processed 3' ends to the 5' ends of strands of target cellular DNA at the site of integration. The 5'-ends are produced by integrase-catalyzed staggered cuts, 5 bp apart. A Y-shaped, gapped, recombination intermediate results, with the 5'-ends of the viral DNA strands and the 3' ends of target DNA strands remaining unjoined, flanking a gap of 5 bp. The last step is viral DNA integration into host chromosome. This involves host DNA repair synthesis in which the 5 bp gaps between the unjoined strands are filled in and then ligated. Since this process occurs at both cuts flanking the HIV genome, a 5 bp duplication of host DNA is produced at the ends of HIV-1 integration. Alternatively, Integrase may catalyze the excision of viral DNA just after strand transfer, this is termed disintegration. This chain is Gag-Pol polyprotein (gag-pol), found in Homo sapiens (Human).